The sequence spans 609 residues: Proteasome-associated ATPase (609 aa).

The segment at 1–25 (MADSERSEAFGTPDDTPLSSNDAAE) is disordered. The stretch at 19–96 (SSNDAAELEQ…LREEVDRLGQ (78 aa)) forms a coiled coil. 296 to 301 (GCGKTL) is a binding site for ATP. Residues 608–609 (YL) are docks into pockets in the proteasome alpha-ring.

The protein belongs to the AAA ATPase family. In terms of assembly, homohexamer. Assembles into a hexameric ring structure that caps the 20S proteasome core. Strongly interacts with the prokaryotic ubiquitin-like protein Pup through a hydrophobic interface; the interacting region of ARC lies in its N-terminal coiled-coil domain. There is one Pup binding site per ARC hexamer ring. Upon ATP-binding, the C-terminus of ARC interacts with the alpha-rings of the proteasome core, possibly by binding to the intersubunit pockets.

The protein operates within protein degradation; proteasomal Pup-dependent pathway. Its function is as follows. ATPase which is responsible for recognizing, binding, unfolding and translocation of pupylated proteins into the bacterial 20S proteasome core particle. May be essential for opening the gate of the 20S proteasome via an interaction with its C-terminus, thereby allowing substrate entry and access to the site of proteolysis. Thus, the C-termini of the proteasomal ATPase may function like a 'key in a lock' to induce gate opening and therefore regulate proteolysis. This is Proteasome-associated ATPase from Mycobacterium marinum (strain ATCC BAA-535 / M).